The primary structure comprises 376 residues: Ribosomal RNA large subunit methyltransferase G (376 aa).

The protein belongs to the methyltransferase superfamily. RlmG family.

The protein localises to the cytoplasm. The catalysed reaction is guanosine(1835) in 23S rRNA + S-adenosyl-L-methionine = N(2)-methylguanosine(1835) in 23S rRNA + S-adenosyl-L-homocysteine + H(+). Functionally, specifically methylates the guanine in position 1835 (m2G1835) of 23S rRNA. The sequence is that of Ribosomal RNA large subunit methyltransferase G from Vibrio vulnificus (strain CMCP6).